We begin with the raw amino-acid sequence, 457 residues long: D-hydantoinase (457 aa).

Positions 57 and 59 each coordinate Zn(2+). Residue serine 69 is modified to Phosphoserine. Position 148 (lysine 148) interacts with Zn(2+). Lysine 148 is modified (N6-carboxylysine). Substrate is bound at residue tyrosine 153. Histidine 181 and histidine 237 together coordinate Zn(2+). Threonine 286 is a substrate binding site. Residue aspartate 313 coordinates Zn(2+). Asparagine 335 serves as a coordination point for substrate.

The protein belongs to the metallo-dependent hydrolases superfamily. Hydantoinase/dihydropyrimidinase family. In terms of assembly, homodimer and homotetramer. Requires Zn(2+) as cofactor. Post-translationally, carboxylation allows a single lysine to coordinate two zinc ions.

In terms of biological role, catalyzes the stereospecific hydrolysis of the cyclic amide bond of D-hydantoin derivatives. The sequence is that of D-hydantoinase (hyuA) from Ralstonia pickettii (Burkholderia pickettii).